A 481-amino-acid polypeptide reads, in one-letter code: Thyroid receptor-interacting protein 6 (481 aa).

The span at 1-12 (MSGPTWLPPKQP) shows a compositional bias: pro residues. A disordered region spans residues 1–259 (MSGPTWLPPK…QVPLSQPPEE (259 aa)). Residue R25 is modified to Asymmetric dimethylarginine; alternate. Omega-N-methylarginine; alternate is present on R25. Phosphotyrosine; by SRC is present on Y55. Position 92 is a phosphoserine (S92). The segment covering 108–122 (DGGRGHAPRRPDRQA) has biased composition (basic and acidic residues). R111 is subject to Omega-N-methylarginine. 2 stretches are compositionally biased toward low complexity: residues 153–173 (SPYGAPTPASYATASTPAGPA) and 183–193 (PVRGCGPPRRG). R185 and R192 each carry omega-N-methylarginine. S195 bears the Phosphoserine mark. Residue R211 is modified to Omega-N-methylarginine. Positions 221–233 (SHREPGPGVKEEA) are enriched in basic and acidic residues. R243 carries the omega-N-methylarginine modification. S254 is modified (phosphoserine). 3 LIM zinc-binding domains span residues 284–321 (CGGCGEDVVGDGAGVVALDRVFHVGCFVCSTCRAQLRG), 344–403 (CSTC…FAPR), and 404–472 (CSVC…RIQE). Residues 474–481 (SATVTTDC) are interaction with MAGI1 and PTPN13.

Belongs to the zyxin/ajuba family. In terms of assembly, specifically interacts with the ligand binding domain of the thyroid receptor (TR) in the presence of thyroid hormone. Interacts (via the third LIM domain and C-terminus) with PTPN13 (via the second PDZ domain). Interacts (via the second LIM domain or via the third LIM domain plus C-terminus) with PDLIM4 (via PDZ domain). Found in a complex with PTPN13 and PDLIM4. Interacts with SVIL isoform 2. Interacts with LPAR2 but not other LPA receptors. Interacts with PRKAA2. Interacts with MAGI1. Interacts with SCRIB. Post-translationally, phosphorylation at Tyr-55 by SRC is required for enhancement of lysophosphatidic acid-induced cell migration. Tyr-55 is dephosphorylated by PTPN13.

Its subcellular location is the cytoplasm. The protein localises to the cytoskeleton. It localises to the cell junction. It is found in the focal adhesion. The protein resides in the nucleus. Relays signals from the cell surface to the nucleus to weaken adherens junction and promote actin cytoskeleton reorganization and cell invasiveness. Involved in lysophosphatidic acid-induced cell adhesion and migration. Acts as a transcriptional coactivator for NF-kappa-B and JUN, and mediates the transrepression of these transcription factors induced by glucocorticoid receptor. The chain is Thyroid receptor-interacting protein 6 (TRIP6) from Bos taurus (Bovine).